A 177-amino-acid chain; its full sequence is Large ribosomal subunit protein bL17 (177 aa).

Positions 136 to 177 (AEEEAPAVEAEATEAVEAPVEETAAAEAEAPAEEAADAEKAE) are disordered. Acidic residues predominate over residues 138 to 149 (EEAPAVEAEATE). The segment covering 150 to 164 (AVEAPVEETAAAEAE) has biased composition (low complexity).

This sequence belongs to the bacterial ribosomal protein bL17 family. In terms of assembly, part of the 50S ribosomal subunit. Contacts protein L32.

In Bifidobacterium longum (strain NCC 2705), this protein is Large ribosomal subunit protein bL17.